Reading from the N-terminus, the 292-residue chain is Tyrosine isonitrile desaturase (292 aa).

Residues histidine 110, aspartate 112, and histidine 259 each contribute to the Fe cation site.

It belongs to the TfdA dioxygenase family. Fe(2+) is required as a cofactor.

It catalyses the reaction (2S)-3-(4-hydroxyphenyl)-2-isocyanopropanoate + 2-oxoglutarate + O2 = (2E)-3-(4-hydroxyphenyl)-2-isocyanoprop-2-enoate + succinate + CO2 + H2O. In terms of biological role, catalyzes the 2-oxoglutarate-dependent oxidation of tyrosine isonitrile. The chain is Tyrosine isonitrile desaturase from Erwinia amylovora (strain CFBP1430).